Here is a 70-residue protein sequence, read N- to C-terminus: MKILYLLFAFLFLAFLSEPGNAYKRCHKKGGHCFPKTVICLPPSSDFGKMDCRWKWKCCKKGSVNNAISI.

The signal sequence occupies residues 1-22; the sequence is MKILYLLFAFLFLAFLSEPGNA. Disulfide bonds link C26/C58, C33/C52, and C40/C59.

Belongs to the crotamine-myotoxin family. Monomer. As to expression, expressed by the venom gland.

The protein localises to the secreted. Cationic peptide that possesses multiple functions. It acts as a cell-penetrating peptide (CPP), and as a potent voltage-gated potassium channel (Kv) inhibitor. It exhibits antimicrobial activities, hind limb paralysis, and severe muscle necrosis by a non-enzymatic mechanism. The polypeptide is Myotoxin (Crotalus helleri (Southern pacific rattlesnake)).